The sequence spans 75 residues: Brevinin-2HS2A (75 aa).

The first 22 residues, 1–22 (MFTLKKPLLLLFFLGTISLSLC), serve as a signal peptide directing secretion. A propeptide spanning residues 23-40 (QEERDADEEEGEMIEEEV) is cleaved from the precursor. An intrachain disulfide couples C69 to C75.

This sequence belongs to the frog skin active peptide (FSAP) family. Brevinin subfamily. As to expression, expressed by the skin glands.

The protein localises to the secreted. Has antimicrobial activity against some Gram-positive bacteria and fungi but has no activity against a range of Gram-negative bacteria except P.faecalis. Has antimicrobial activity against the Gram-positive bacteria S.aureus ATCC 25923 (MIC=19 uM), B.licheniformis X39 (MIC=37.5 uM) and R.rhodochrous X15 (MIC=9.5 uM), is virtually inactive against E.faecium 091299 (MIC=150 uM) and S.carnosus KHS (MIC=150 uM) and inactive against E.faecalis 981. Active against the Gram-negative bacterium P.faecalis X29 (MIC=9.5 uM) and is inactive against E.coli, P.aeruginosa and S.typhi. Active against C.albicans ATCC 2002 (MIC=19 uM) and is also active against the slime mold 090223 (MIC=37.5 uM). Has extremely low hemolytic activity against human erythrocytes (LC(50)=300 uM). In Odorrana hainanensis (Odor frog), this protein is Brevinin-2HS2A.